A 411-amino-acid polypeptide reads, in one-letter code: Methylthioribose-1-phosphate isomerase (411 aa).

Aspartate 284 serves as the catalytic Proton donor.

The protein belongs to the eIF-2B alpha/beta/delta subunits family. MtnA subfamily.

It is found in the cytoplasm. Its subcellular location is the nucleus. The catalysed reaction is 5-(methylsulfanyl)-alpha-D-ribose 1-phosphate = 5-(methylsulfanyl)-D-ribulose 1-phosphate. It functions in the pathway amino-acid biosynthesis; L-methionine biosynthesis via salvage pathway; L-methionine from S-methyl-5-thio-alpha-D-ribose 1-phosphate: step 1/6. Its function is as follows. Catalyzes the interconversion of methylthioribose-1-phosphate (MTR-1-P) into methylthioribulose-1-phosphate (MTRu-1-P). The chain is Methylthioribose-1-phosphate isomerase from Komagataella phaffii (strain GS115 / ATCC 20864) (Yeast).